We begin with the raw amino-acid sequence, 286 residues long: Polyamine aminopropyltransferase (286 aa).

Positions 6–239 (PVWIDEVFED…GWWSWLYASD (234 aa)) constitute a PABS domain. Gln-34 is a binding site for S-methyl-5'-thioadenosine. Spermidine contacts are provided by His-65 and Asp-89. Residues Glu-109 and 140–141 (DG) each bind S-methyl-5'-thioadenosine. The Proton acceptor role is filled by Asp-159. Position 159–162 (159–162 (DGSD)) interacts with spermidine. Position 166 (Pro-166) interacts with S-methyl-5'-thioadenosine.

The protein belongs to the spermidine/spermine synthase family. As to quaternary structure, homodimer or homotetramer. Homodimer.

The protein localises to the cytoplasm. The catalysed reaction is S-adenosyl 3-(methylsulfanyl)propylamine + putrescine = S-methyl-5'-thioadenosine + spermidine + H(+). The protein operates within amine and polyamine biosynthesis; spermidine biosynthesis; spermidine from putrescine: step 1/1. Catalyzes the irreversible transfer of a propylamine group from the amino donor S-adenosylmethioninamine (decarboxy-AdoMet) to putrescine (1,4-diaminobutane) to yield spermidine. The protein is Polyamine aminopropyltransferase of Synechococcus elongatus (strain ATCC 33912 / PCC 7942 / FACHB-805) (Anacystis nidulans R2).